We begin with the raw amino-acid sequence, 94 residues long: Co-chaperonin GroES (94 aa).

This sequence belongs to the GroES chaperonin family. In terms of assembly, heptamer of 7 subunits arranged in a ring. Interacts with the chaperonin GroEL.

It localises to the cytoplasm. Together with the chaperonin GroEL, plays an essential role in assisting protein folding. The GroEL-GroES system forms a nano-cage that allows encapsulation of the non-native substrate proteins and provides a physical environment optimized to promote and accelerate protein folding. GroES binds to the apical surface of the GroEL ring, thereby capping the opening of the GroEL channel. The sequence is that of Co-chaperonin GroES from Lactobacillus delbrueckii subsp. bulgaricus (strain ATCC BAA-365 / Lb-18).